The primary structure comprises 618 residues: Glucose starvation modulator protein 1 (618 aa).

The segment at residues 20-48 is a DNA-binding region (zn(2)-C6 fungal-type); that stretch reads CEFCHTKHIQCDVGRPCQNCLKRNIGKFC. Positions 325–352 are disordered; that stretch reads ANANTHPSHNAKLESECDSSSHSDADLE. The segment covering 335 to 352 has biased composition (basic and acidic residues); that stretch reads AKLESECDSSSHSDADLE. A PAS domain is found at 466-538; the sequence is LLDLENMAKL…QIFNELLAFG (73 aa).

This sequence belongs to the ERT1/acuK family.

It localises to the nucleus. Its function is as follows. Transcription factor which regulates nonfermentable carbon utilization. Binds specifically to 5'-CGGN(8)CGG-3' and 5'-CGGN(9)CGG-3' sequences in the promoter region. In Saccharomyces cerevisiae (strain RM11-1a) (Baker's yeast), this protein is Glucose starvation modulator protein 1 (GSM1).